The following is a 333-amino-acid chain: MGPVVPVEAFRSAGKISALGAKKGYVTFLAGNGDYVKGVVGLAKGLRKVKSAYPLVVAILPDVPEEHRELLRSQGCIVKEIEPIYPPANQIQFAMAYYVINYSKLRIWNFEEYSKMVYLDADIQVYENIDHLLDTPDGYFYAVMDCFCEKTWSHSRQFSIGYCQQCPNKVTWPAQMGSPPPLYFNAGMFVFEPSKTTYQTLLHTLRITPPTPFAEQDFLNMFFEPIYKPIPLVYNLVLAMLWRHPENVELEKVQVVHYCAAGSKPWRYTGQEANMDREDIKMLVKKWWDVYNDESLDFKAEDSIAGEETFSMPSFIASLPEPAVSYIPAPSAA.

Residue Lys-104 is part of the active site. Residues Asp-120, Asp-122, and His-257 each contribute to the Mn(2+) site.

The protein belongs to the glycosyltransferase 8 family. Galactosyltransferase subfamily. A divalent metal cation serves as cofactor. Expressed in source leaves, specifically in the mesophyll.

The protein localises to the cytoplasm. The catalysed reaction is myo-inositol + UDP-alpha-D-galactose = alpha-D-galactosyl-(1-&gt;3)-1D-myo-inositol + UDP + H(+). Functionally, major galactinol synthase mainly involved in the biosynthesis of storage raffinose family oligosaccharides (RFOs) that function as osmoprotectants. May promote plant stress tolerance. In Ajuga reptans (Bugle), this protein is Galactinol synthase 1 (GOLS1).